We begin with the raw amino-acid sequence, 169 residues long: Small ribosomal subunit protein bS16 (169 aa).

The segment at A114–E169 is disordered. Basic and acidic residues predominate over residues A129 to A156. Over residues A159 to E169 the composition is skewed to acidic residues.

This sequence belongs to the bacterial ribosomal protein bS16 family.

This is Small ribosomal subunit protein bS16 from Corynebacterium urealyticum (strain ATCC 43042 / DSM 7109).